A 490-amino-acid polypeptide reads, in one-letter code: Allantoin permease (490 aa).

A run of 12 helical transmembrane segments spans residues 36-56 (IWMG…LIAI), 60-80 (PWQV…ALAL), 116-136 (AIMW…ILLL), 151-171 (ILGI…IHLL), 190-210 (LVYL…GGLG), 225-245 (TFWP…TLIL), 265-285 (FYGL…VTSG), 308-328 (YVIV…NVAA), 350-370 (GSFI…MESA), 373-393 (VYAF…VMMA), 425-445 (AFAA…VPVL), and 448-468 (LYDI…IVLM).

The protein belongs to the purine-cytosine permease (2.A.39) family.

It localises to the cell membrane. It catalyses the reaction (S)-allantoin(in) + H(+)(in) = (S)-allantoin(out) + H(+)(out). Its function is as follows. Uptake of allantoin into the cell. Allantoin uptake is not dependent on sodium, and PucI is likely to be a proton-coupled symporter. Shows highest recognition for binding of allantoin, good recognition for binding of hydantoin, L-5-benzylhydantoin and 5-hydroxyhydantoin, and to a lesser extent for a range of nucleobases and nucleosides. The chain is Allantoin permease from Bacillus subtilis (strain 168).